The primary structure comprises 158 residues: Transcription elongation factor GreA (158 aa).

A coiled-coil region spans residues 45 to 72; it reads AEYHAAREQQSFIEGRIKQLEGELSHAE.

The protein belongs to the GreA/GreB family.

Necessary for efficient RNA polymerase transcription elongation past template-encoded arresting sites. The arresting sites in DNA have the property of trapping a certain fraction of elongating RNA polymerases that pass through, resulting in locked ternary complexes. Cleavage of the nascent transcript by cleavage factors such as GreA or GreB allows the resumption of elongation from the new 3'terminus. GreA releases sequences of 2 to 3 nucleotides. This chain is Transcription elongation factor GreA, found in Xanthomonas campestris pv. campestris (strain ATCC 33913 / DSM 3586 / NCPPB 528 / LMG 568 / P 25).